Here is a 44-residue protein sequence, read N- to C-terminus: Protein PsbN (44 aa).

A helical transmembrane segment spans residues 6–26 (FFYGVFLWCLLISVTGYSIYI).

Belongs to the PsbN family.

It localises to the plastid. Its subcellular location is the chloroplast thylakoid membrane. In terms of biological role, may play a role in photosystem I and II biogenesis. In Ostreococcus tauri, this protein is Protein PsbN.